The primary structure comprises 205 residues: ESCRT-related protein CHMP1 (205 aa).

Coiled coils occupy residues 13-51 (DLKF…MDGA) and 109-140 (GNLQ…GAMA).

Belongs to the SNF7 family.

Its subcellular location is the cytoplasm. The protein localises to the endosome membrane. In terms of biological role, involved in ESCRT-dependent multivesicular body (MVB) formation and sorting of endosomal cargo proteins into MVBs. The polypeptide is ESCRT-related protein CHMP1 (Oryza sativa subsp. japonica (Rice)).